A 238-amino-acid polypeptide reads, in one-letter code: Pyridoxine 5'-phosphate synthase (238 aa).

Asn-7 lines the 3-amino-2-oxopropyl phosphate pocket. A 1-deoxy-D-xylulose 5-phosphate-binding site is contributed by 9–10 (DH). Arg-18 lines the 3-amino-2-oxopropyl phosphate pocket. His-43 serves as the catalytic Proton acceptor. Arg-45 and His-50 together coordinate 1-deoxy-D-xylulose 5-phosphate. The active-site Proton acceptor is the Glu-70. Residue Thr-100 participates in 1-deoxy-D-xylulose 5-phosphate binding. Residue His-190 is the Proton donor of the active site. Residues Gly-191 and 212–213 (GH) contribute to the 3-amino-2-oxopropyl phosphate site.

This sequence belongs to the PNP synthase family. Homooctamer; tetramer of dimers.

The protein localises to the cytoplasm. It carries out the reaction 3-amino-2-oxopropyl phosphate + 1-deoxy-D-xylulose 5-phosphate = pyridoxine 5'-phosphate + phosphate + 2 H2O + H(+). It functions in the pathway cofactor biosynthesis; pyridoxine 5'-phosphate biosynthesis; pyridoxine 5'-phosphate from D-erythrose 4-phosphate: step 5/5. Its function is as follows. Catalyzes the complicated ring closure reaction between the two acyclic compounds 1-deoxy-D-xylulose-5-phosphate (DXP) and 3-amino-2-oxopropyl phosphate (1-amino-acetone-3-phosphate or AAP) to form pyridoxine 5'-phosphate (PNP) and inorganic phosphate. The polypeptide is Pyridoxine 5'-phosphate synthase (Prochlorococcus marinus (strain MIT 9515)).